Reading from the N-terminus, the 118-residue chain is Large ribosomal subunit protein bL20 (118 aa).

It belongs to the bacterial ribosomal protein bL20 family.

Binds directly to 23S ribosomal RNA and is necessary for the in vitro assembly process of the 50S ribosomal subunit. It is not involved in the protein synthesizing functions of that subunit. This Aliarcobacter butzleri (strain RM4018) (Arcobacter butzleri) protein is Large ribosomal subunit protein bL20.